The following is a 1084-amino-acid chain: Autophagy-related protein 11 (1084 aa).

Coiled-coil stretches lie at residues valine 585–serine 739 and valine 847–lysine 879. Disordered stretches follow at residues serine 925–arginine 961 and asparagine 973–alanine 1007. Low complexity-rich tracts occupy residues serine 940–serine 949 and asparagine 973–asparagine 993. Over residues lysine 994–alanine 1007 the composition is skewed to polar residues.

It belongs to the ATG11 family. As to quaternary structure, homodimer and potential homooligomers. Interacts with ATG1 kinase and the ATG19 and ATG34 cargo protein transporters. Interacts with ATG9, ATG17 and ATG20.

Its subcellular location is the preautophagosomal structure membrane. The protein localises to the vacuole membrane. Its function is as follows. Involved in cytoplasm to vacuole transport (Cvt), pexophagy, mitophagy and nucleophagy. Recruits mitochondria for their selective degradation via autophagy (mitophagy) during starvation, through its interaction with ATG32. Works as scaffold proteins that recruit ATG proteins to the pre-autophagosome (PAS), the site of vesicle/autophagosome formation. Required for ATG9 anterograde transport from the mitochondria to the PAS. Also recruits the ATG19-prAPE1 complex to the PAS. Required for the Cvt vesicles completion. This Kluyveromyces marxianus (strain DMKU3-1042 / BCC 29191 / NBRC 104275) (Yeast) protein is Autophagy-related protein 11.